A 193-amino-acid polypeptide reads, in one-letter code: Ribonuclease HII (193 aa).

One can recognise an RNase H type-2 domain in the interval 15–193 (CIVAGIDEAG…PYHRRSFRCC (179 aa)). A divalent metal cation contacts are provided by D21, E22, and D112.

Belongs to the RNase HII family. The cofactor is Mn(2+). Mg(2+) is required as a cofactor.

The protein localises to the cytoplasm. The catalysed reaction is Endonucleolytic cleavage to 5'-phosphomonoester.. Endonuclease that specifically degrades the RNA of RNA-DNA hybrids. In Rickettsia rickettsii (strain Iowa), this protein is Ribonuclease HII.